The sequence spans 1216 residues: Phospholipase D B (1216 aa).

Residues 1–14 (MNLSQEHAINQNLH) are compositionally biased toward polar residues. Residues 1-48 (MNLSQEHAINQNLHKNQKNEEKIEKKTINKDGRGQMNYDGEEGQGEKS) are disordered. The segment covering 17-33 (QKNEEKIEKKTINKDGR) has biased composition (basic and acidic residues). EF-hand domains follow at residues 196-231 (RNADLTISLMNAIDRNGDQKIAFPEFVQALSIMCRG) and 232-267 (TKKERLRFTFEICDFNGDSLVSRDEVYSTVKAISDI). Residues Asp-209, Asn-211, Asp-213, Lys-215, and Glu-220 each contribute to the Ca(2+) site. The 116-residue stretch at 347 to 462 (EINMNGQLTK…WVNAIRFHSR (116 aa)) folds into the PH domain. The PLD phosphodiesterase 1 domain maps to 585–612 (LSWSHHQKNAIIDQQIAFVGGIDICLMR). Catalysis depends on residues His-590, Lys-592, and Asp-597. The tract at residues 732-844 (VSYGREKPTH…GLKSKNYKNN (113 aa)) is disordered. A compositionally biased stretch (low complexity) spans 776 to 789 (NNSTNSENSENSYS). Residues 790 to 813 (EFDEEDEEGNQEEEDEDEFDEFEK) show a composition bias toward acidic residues. One can recognise a PLD phosphodiesterase 2 domain in the interval 1036–1063 (EQIYVHSKVLIVDDRVAVIGSCNINDRS). Active-site residues include His-1041, Lys-1043, and Asp-1048.

Belongs to the phospholipase D family.

It localises to the cytoplasmic vesicle. The protein localises to the cytoplasm. It is found in the cell cortex. It catalyses the reaction a 1,2-diacyl-sn-glycero-3-phosphocholine + H2O = a 1,2-diacyl-sn-glycero-3-phosphate + choline + H(+). With respect to regulation, inhibited by butan-1-ol. Functionally, plays a role in cell growth. Hydrolyzes membrane phospholipids, such as PtdCho (phosphatidylcholine), producing the free headgroup and PtdOH (phosphatidic acid; signaling molecule on its own). Involved in the inhibition of actin-based motility and endocytosis. Its inhibition causes complete collapse of F-actin organization. Plays an important role in cell migration by localizing along the anterior cell membrane. Overexpression leads to the inability to aggregate even at higher cell density. Also known as a negative regulator of quorum sensing. This Dictyostelium discoideum (Social amoeba) protein is Phospholipase D B (pldB).